Consider the following 397-residue polypeptide: Subtilisin-like protease 3 (397 aa).

An N-terminal signal peptide occupies residues 1 to 19 (MGCIKVISVFLAAIAAVDA). A propeptide spanning residues 20-116 (RAFFHNRGGN…VEHDRVVKLA (97 aa)) is cleaved from the precursor. Positions 35-116 (SYIVVMKDGV…VEHDRVVKLA (82 aa)) constitute an Inhibitor I9 domain. The region spanning 126–397 (TWGLGRVSHK…NRLLYNGSGR (272 aa)) is the Peptidase S8 domain. Catalysis depends on charge relay system residues Asp158 and His189. Asn250 carries an N-linked (GlcNAc...) asparagine glycan. Ser344 serves as the catalytic Charge relay system. Residue Asn393 is glycosylated (N-linked (GlcNAc...) asparagine).

Belongs to the peptidase S8 family.

The protein localises to the secreted. In terms of biological role, secreted subtilisin-like serine protease with keratinolytic activity that contributes to pathogenicity. The sequence is that of Subtilisin-like protease 3 (SUB3) from Arthroderma benhamiae (strain ATCC MYA-4681 / CBS 112371) (Trichophyton mentagrophytes).